The sequence spans 306 residues: Ribonuclease BN (306 aa).

Residues His-64, His-66, Asp-68, His-69, His-141, Asp-212, and His-270 each coordinate Zn(2+). Asp-68 acts as the Proton acceptor in catalysis.

The protein belongs to the RNase Z family. RNase BN subfamily. As to quaternary structure, homodimer. Zn(2+) is required as a cofactor.

In terms of biological role, zinc phosphodiesterase, which has both exoribonuclease and endoribonuclease activities. The sequence is that of Ribonuclease BN from Klebsiella pneumoniae (strain 342).